We begin with the raw amino-acid sequence, 800 residues long: Nucleolar complex protein 3 homolog (800 aa).

Composition is skewed to basic residues over residues 1–19 and 42–53; these read MGPA…RKLL and KKQRKEQRKLHK. Disordered regions lie at residues 1-91 and 167-197; these read MGPA…TDMM and KPVL…SAPL. A compositionally biased stretch (basic and acidic residues) spans 65–74; the sequence is PLERYKKRPE. Residues 449–490 are a coiled coil; the sequence is SFKEKRKNLSRMQRKWKKAEEKLQKELLEAEATESKEKKIKL. The disordered stretch occupies residues 780–800; it reads LQEEPEQMSLDFTSPHTQQEP. The span at 789–800 shows a compositional bias: polar residues; sequence LDFTSPHTQQEP.

Belongs to the CBF/MAK21 family.

Its subcellular location is the nucleus. It is found in the nucleolus. This chain is Nucleolar complex protein 3 homolog (noc3l), found in Danio rerio (Zebrafish).